A 354-amino-acid polypeptide reads, in one-letter code: MTIALGRFTKEEEKDLFDIMDDWLRRDRFVFVGWSGLLLFPCAYFALGGWFTGTTFVTSWYTHGLASSYLEGCNFLTAAVSTPANSLAHSLLLLWGPEAQGDFTRWCQLGGLWTFVALHGAFALIGFMLRQFELARSVQLRPYNAIAFSGPIAVFVSVFLIYPLGQSGWFFAPSFGVAAIFRFILFFQGFHNWTLNPFHMMGVAGVLGAALLCAIHGATVENTLFEDGDGANTFRAFNPTQAEETYSMVTANRFWSQIFGVAFSNKRWLHFFMLFVPVTGLWMSALGVVGLALNLRAYDFVSQEIRAAEDPEFETFYTKNILLNEGIRAWMAAQDQPHENLVFPEEVLPRGNAL.

Residue threonine 2 is modified to N-acetylthreonine. At threonine 2 the chain carries Phosphothreonine. Residues 42–62 (CAYFALGGWFTGTTFVTSWYT) form a helical membrane-spanning segment. Histidine 119 is a binding site for chlorophyll a. Residues 126 to 142 (GFMLRQFELARSVQLRP) traverse the membrane as a helical segment. The pheophytin a site is built by glutamine 131 and asparagine 144. Residues 154–167 (VFVSVFLIYPLGQS) form a helical membrane-spanning segment. Histidine 199 serves as a coordination point for chlorophyll a. Residues 209–229 (AALLCAIHGATVENTLFEDGD) form a helical membrane-spanning segment. A plastoquinone-binding residues include histidine 216 and phenylalanine 263. Residue histidine 216 coordinates Fe cation. Histidine 270 contacts Fe cation. The chain crosses the membrane as a helical span at residues 280-296 (GLWMSALGVVGLALNLR).

The protein belongs to the reaction center PufL/M/PsbA/D family. In terms of assembly, PSII is composed of 1 copy each of membrane proteins PsbA, PsbB, PsbC, PsbD, PsbE, PsbF, PsbH, PsbI, PsbJ, PsbK, PsbL, PsbM, PsbT, PsbX, PsbY, PsbZ, Psb30/Ycf12, at least 3 peripheral proteins of the oxygen-evolving complex and a large number of cofactors. It forms dimeric complexes. The D1/D2 heterodimer binds P680, chlorophylls that are the primary electron donor of PSII, and subsequent electron acceptors. It shares a non-heme iron and each subunit binds pheophytin, quinone, additional chlorophylls, carotenoids and lipids. There is also a Cl(-1) ion associated with D1 and D2, which is required for oxygen evolution. The PSII complex binds additional chlorophylls, carotenoids and specific lipids. is required as a cofactor.

The protein resides in the plastid. It is found in the chloroplast thylakoid membrane. The enzyme catalyses 2 a plastoquinone + 4 hnu + 2 H2O = 2 a plastoquinol + O2. Its function is as follows. Photosystem II (PSII) is a light-driven water:plastoquinone oxidoreductase that uses light energy to abstract electrons from H(2)O, generating O(2) and a proton gradient subsequently used for ATP formation. It consists of a core antenna complex that captures photons, and an electron transfer chain that converts photonic excitation into a charge separation. The D1/D2 (PsbA/PsbD) reaction center heterodimer binds P680, the primary electron donor of PSII as well as several subsequent electron acceptors. D2 is needed for assembly of a stable PSII complex. In Piper cenocladum (Ant piper), this protein is Photosystem II D2 protein.